The chain runs to 467 residues: 26S proteasome regulatory subunit 7 homolog (467 aa).

Disordered regions lie at residues 1–26 and 108–140; these read MPPK…DDKI and GNGE…DEDD. A compositionally biased stretch (low complexity) spans 117 to 134; sequence TDNNNSGNSNSNSNQQST. A phosphoserine mark is found at S164 and S231. 250–257 is a binding site for ATP; it reads GPPGTGKT.

The protein belongs to the AAA ATPase family. Interacts with UBR1 and CIC1. In terms of processing, the N-terminus is blocked.

Its subcellular location is the cytoplasm. The protein localises to the nucleus. The 26S proteasome is involved in the ATP-dependent degradation of ubiquitinated proteins. The regulatory (or ATPase) complex confers ATP dependency and substrate specificity to the 26S complex. The chain is 26S proteasome regulatory subunit 7 homolog (RPT1) from Saccharomyces cerevisiae (strain ATCC 204508 / S288c) (Baker's yeast).